The chain runs to 687 residues: Probable intron-encoded endonuclease aI3 (687 aa).

Residues 1-374 (MKQMSYVTRW…NASMDVAFHD (374 aa)) are COX1 exons 1 to 3 encoded. The next 10 helical transmembrane spans lie at 19 to 39 (IGMT…GMSV), 69 to 89 (LLMM…NFFL), 103 to 123 (LNNI…CSVL), 152 to 172 (AMFA…NFMV), 188 to 208 (PLFA…LPVL), 240 to 260 (LFWF…FGVM), 273 to 293 (FGEM…FLVW), 315 to 335 (MVIA…IYGG), 341 to 361 (VPML…LTGV), and 376 to 396 (IFIY…NNYT). Residues 375 to 687 (RIFIYYVSFF…KKESLMKFLK (313 aa)) form a COX1 intron 3 encoded region.

In the C-terminal section; belongs to the LAGLIDADG endonuclease family. The protein in the N-terminal section; belongs to the heme-copper respiratory oxidase family. In terms of processing, the mature protein may arise from proteolytic cleavage of an in-frame translation of COX1 exons 1 to 3 plus intron 3, containing the aI3 open reading frame.

Its subcellular location is the mitochondrion. It localises to the membrane. In terms of biological role, mitochondrial DNA endonuclease involved in intron homing. The polypeptide is Probable intron-encoded endonuclease aI3 (aI3) (Debaryomyces hansenii (strain ATCC 36239 / CBS 767 / BCRC 21394 / JCM 1990 / NBRC 0083 / IGC 2968) (Yeast)).